A 235-amino-acid polypeptide reads, in one-letter code: Ribonuclease PH (235 aa).

Residues Arg86 and 124–126 each bind phosphate; that span reads GTR.

The protein belongs to the RNase PH family. Homohexameric ring arranged as a trimer of dimers.

The catalysed reaction is tRNA(n+1) + phosphate = tRNA(n) + a ribonucleoside 5'-diphosphate. Phosphorolytic 3'-5' exoribonuclease that plays an important role in tRNA 3'-end maturation. Removes nucleotide residues following the 3'-CCA terminus of tRNAs; can also add nucleotides to the ends of RNA molecules by using nucleoside diphosphates as substrates, but this may not be physiologically important. Probably plays a role in initiation of 16S rRNA degradation (leading to ribosome degradation) during starvation. The sequence is that of Ribonuclease PH from Francisella tularensis subsp. tularensis (strain FSC 198).